The sequence spans 790 residues: MRMLRWLILSAFSVAGAVQAQGNQDSAAASAPSASIGAPVLRTSPGLRVHRLPDEKIPAFMEADQISGDPDSEVTLTGNAQVRRVDGIIKGDRINYRRDTGDVDVQGSARMLRDGTLITGPSARLNVDTYSGEIQEPNFWIGASGGTAQARHADIFSKSQMRLSQVTYSGCPCPKPSWYIKADTVDLDFDENEGVARNGVLYFKDVPILASPYLTFPVKKERKSGFLMPTYGTTSNSGFDISLPYYFNLAPNYDLTLVPRYLSKRGAQLGGEFRYLGSGYRGVAIGTYLPDDNETGRDRWMYRTYHRQLLGNGFYTDWDIAGASDDNYFRDISELGLNTASTTYLPRRGRVGWSSTYWQTYAQVYKYQTLQDPDAPLAPPYDKVPELWLKGARYDWGGFDAEWVSTAVRFQRSLLNGRRLGPDGDRLQTYPTVSYPIGRPGWFLVPKVGVHYTQYRTDWYNRDWNRIGLSNYKRTESRTVPIMSLDAGMIFERDASLFGKAATQTLEPRLYYLRVPYRDQSALPVYDTTLADFSFDQAFQENIYTGGWDRIANANQLTAALTTRWLDANTGFERLSLSAAQRIYFQDQEVTLPAEQPRKNVRSDFLVGATAALTDTLITDVAAQYNPYDNKWSRGMVSARWSPQRLTTVAVAYRYQRDPLPGISYQPQGQNQVSLAVQWPIHRRWYGVGRVDYSLRSEPATAAAAEQSPRVTQAIAGLEYKGDCCWVGRVVYQRYAVSAADTNTALFFQLELTGLGALGTDPISLLNRSIPGYQSVVPPTPTGTTFERYE.

Residues 1–20 (MRMLRWLILSAFSVAGAVQA) form the signal peptide.

The protein belongs to the LptD family. In terms of assembly, component of the lipopolysaccharide transport and assembly complex. Interacts with LptE and LptA.

It is found in the cell outer membrane. Functionally, together with LptE, is involved in the assembly of lipopolysaccharide (LPS) at the surface of the outer membrane. This chain is LPS-assembly protein LptD, found in Bordetella pertussis (strain Tohama I / ATCC BAA-589 / NCTC 13251).